Consider the following 341-residue polypeptide: Ribonucleoside-diphosphate reductase small chain A (341 aa).

Residues 1–20 (MGSLKEGQGRDMEEGESEEP) are disordered. Positions 87, 118, and 121 each coordinate Fe cation. Tyr-125 is a catalytic residue. Fe cation contacts are provided by Glu-180, Glu-214, and His-217.

This sequence belongs to the ribonucleoside diphosphate reductase small chain family. As to quaternary structure, homodimer and heterodimer with TSO2. Heterotetramer of two R1 and two R2 chains. A radical transfer pathway may occur between Tyr-125 of protein R2 and R1. Homodimer contains a dinuclear non-heme iron center and a stable tyrosyl radical essential for activity. A transfer pathway may occur between Tyr-125 of protein R2 and R1. Interacts with CSN7. Fe cation is required as a cofactor. Expressed in rosette leaves, cauline leaves, stems and flowers.

Its subcellular location is the cytoplasm. It catalyses the reaction a 2'-deoxyribonucleoside 5'-diphosphate + [thioredoxin]-disulfide + H2O = a ribonucleoside 5'-diphosphate + [thioredoxin]-dithiol. Its activity is regulated as follows. Inhibited by phenol, paracetamol, 2,4,6-trimethylphenol, resveratrol, furfuryl mercaptan, 2-thiophenthiol, phenylhydrazine, and hydroxyurea. Functionally, provides the precursors necessary for DNA synthesis. Catalyzes the biosynthesis of deoxyribonucleotides from the corresponding ribonucleotides. The sequence is that of Ribonucleoside-diphosphate reductase small chain A (RNR2A) from Arabidopsis thaliana (Mouse-ear cress).